We begin with the raw amino-acid sequence, 372 residues long: Alpha-1-antitrypsin homolog (372 aa).

The first 19 residues, 1 to 19 (MPATCLLHTMLTLPSPSTR), serve as a signal peptide directing secretion. N214 and N226 each carry an N-linked (GlcNAc...) asparagine glycan. An RCL region spans residues 328-347 (AATTIEIMPMSLPDTVILNR).

This sequence belongs to the serpin family.

It is found in the secreted. The chain is Alpha-1-antitrypsin homolog from Cyprinus carpio (Common carp).